A 167-amino-acid polypeptide reads, in one-letter code: MRSPKVKFLTIFTLSILITKMSFASSACFNEAGTMFRIEPNLIKAIALVESNLKKDSIGKNRDKKNNIKSFDYGLMQINQMHIPMLKKRGIIKDERDLLDNPCLNIKIGTEILYKHFSRCGMTWQCLGTYNAGFAMDNQKKRLQYAKKIYIVYTRLNELDNRKALAK.

Residues 1–24 (MRSPKVKFLTIFTLSILITKMSFA) form the signal peptide.

The protein belongs to the IagB/IpgF/P19 family.

The protein localises to the periplasm. The protein is Peptidoglycan-binding-like protein (pbl) of Escherichia coli O157:H7.